The chain runs to 156 residues: Small ribosomal subunit protein bS18c (156 aa).

A disordered region spans residues 1 to 54 (MYTSKQPFLKSKQPFRKSKQPFRKSKQPFRKFKKPFRKSKQPFRRRPRIGPGDR). Over residues 13-48 (QPFRKSKQPFRKSKQPFRKFKKPFRKSKQPFRRRPR) the composition is skewed to basic residues.

The protein belongs to the bacterial ribosomal protein bS18 family. Part of the 30S ribosomal subunit.

It is found in the plastid. It localises to the chloroplast. This is Small ribosomal subunit protein bS18c from Lolium perenne (Perennial ryegrass).